A 500-amino-acid polypeptide reads, in one-letter code: Lysine--tRNA ligase (500 aa).

Mg(2+) contacts are provided by Glu410 and Glu417.

Belongs to the class-II aminoacyl-tRNA synthetase family. Homodimer. The cofactor is Mg(2+).

The protein localises to the cytoplasm. It carries out the reaction tRNA(Lys) + L-lysine + ATP = L-lysyl-tRNA(Lys) + AMP + diphosphate. The chain is Lysine--tRNA ligase from Mycoplasma mycoides subsp. mycoides SC (strain CCUG 32753 / NCTC 10114 / PG1).